The following is a 1079-amino-acid chain: Integrator complex subunit 3 homolog (1079 aa).

Disordered regions lie at residues 539–574 (ESSE…DDLP), 925–949 (YPSS…TPSA), and 1010–1079 (AVGR…NDSD). Over residues 938–949 (KGSSAASSTPSA) the composition is skewed to low complexity. Phosphoserine occurs at positions 1049, 1050, 1054, and 1055. Basic residues predominate over residues 1062–1073 (HKITQAAKKRKK).

This sequence belongs to the Integrator subunit 3 family. In terms of assembly, belongs to the multiprotein complex Integrator, at least composed of IntS1, IntS2, IntS3, IntS4, omd/IntS5, IntS6, defl/IntS7, IntS8, IntS9, IntS10, IntS11, IntS12, asun/IntS13, IntS14 and IntS15. The core complex associates with protein phosphatase 2A subunits mts/PP2A and Pp2A-29B, to form the Integrator-PP2A (INTAC) complex.

Its subcellular location is the nucleus. The protein localises to the cytoplasm. Functionally, component of the integrator complex, a multiprotein complex that terminates RNA polymerase II (Pol II) transcription in the promoter-proximal region of genes. The integrator complex provides a quality checkpoint during transcription elongation by driving premature transcription termination of transcripts that are unfavorably configured for transcriptional elongation: the complex terminates transcription by (1) catalyzing dephosphorylation of the C-terminal domain (CTD) of Pol II subunit Polr2A/Rbp1 and Spt5, and (2) degrading the exiting nascent RNA transcript via endonuclease activity. The integrator complex is also involved in the 3'-end processing of the U7 snRNA, and also the spliceosomal snRNAs U1, U2, U4 and U5. This is Integrator complex subunit 3 homolog (IntS3) from Drosophila virilis (Fruit fly).